The following is a 474-amino-acid chain: MTQNIGKITQVISAVVDVKFTNNGKLPEILNALECYNDKQRIVLEVAQHIGDDTVRCIAMDSTEGLIRGLEVIDTGNPIRIPVGTETLGRIMNVVGEPIDGKGEIKSATISSIYKPAPDFINQSTERDILVTGIKVVDLLAPYAKGGKIGLFGGAGVGKTVLIMELINNVAKAHGGYTVFAGVGERTREGNDLYHEMIASGVINLEEPEKSKVALVYGQMNEPPGARARVALSGLTIAESFRDMNAGQDVLFFVDNIFRFTQAGSEVSALLGRIPSAVGYQPTLATDMGELQERITSTKHGSITSVQAIYVPADDLTDPAPSTSFAHLDATTVLSRQIAELGIYPAVDPLDSNSQVLDPMIVGEKHYGVARQVQQVLQTYKSLQDIIAILGMDELSEEDKLTVSRARKIQRFLSQPFHVAEVFTGVEGKFVNLDDTIEGFKGLVEGQYDDLPEAAFYMVGTIDEAVEKAKILKI.

153–160 (GGAGVGKT) lines the ATP pocket.

The protein belongs to the ATPase alpha/beta chains family. As to quaternary structure, F-type ATPases have 2 components, CF(1) - the catalytic core - and CF(0) - the membrane proton channel. CF(1) has five subunits: alpha(3), beta(3), gamma(1), delta(1), epsilon(1). CF(0) has three main subunits: a(1), b(2) and c(9-12). The alpha and beta chains form an alternating ring which encloses part of the gamma chain. CF(1) is attached to CF(0) by a central stalk formed by the gamma and epsilon chains, while a peripheral stalk is formed by the delta and b chains.

Its subcellular location is the cell inner membrane. It catalyses the reaction ATP + H2O + 4 H(+)(in) = ADP + phosphate + 5 H(+)(out). Functionally, produces ATP from ADP in the presence of a proton gradient across the membrane. The catalytic sites are hosted primarily by the beta subunits. In Rickettsia prowazekii (strain Madrid E), this protein is ATP synthase subunit beta.